The following is a 255-amino-acid chain: Pyrroloquinoline-quinone synthase (255 aa).

This sequence belongs to the PqqC family.

It catalyses the reaction 6-(2-amino-2-carboxyethyl)-7,8-dioxo-1,2,3,4,7,8-hexahydroquinoline-2,4-dicarboxylate + 3 O2 = pyrroloquinoline quinone + 2 H2O2 + 2 H2O + H(+). The protein operates within cofactor biosynthesis; pyrroloquinoline quinone biosynthesis. Ring cyclization and eight-electron oxidation of 3a-(2-amino-2-carboxyethyl)-4,5-dioxo-4,5,6,7,8,9-hexahydroquinoline-7,9-dicarboxylic-acid to PQQ. The protein is Pyrroloquinoline-quinone synthase of Granulibacter bethesdensis (strain ATCC BAA-1260 / CGDNIH1).